The following is a 681-amino-acid chain: DNA-directed RNA polymerase subunit beta' (681 aa).

Cys-69, Cys-71, Cys-87, and Cys-90 together coordinate Zn(2+). Residues Asp-489, Asp-491, and Asp-493 each coordinate Mg(2+).

This sequence belongs to the RNA polymerase beta' chain family. RpoC1 subfamily. As to quaternary structure, in plastids the minimal PEP RNA polymerase catalytic core is composed of four subunits: alpha, beta, beta', and beta''. When a (nuclear-encoded) sigma factor is associated with the core the holoenzyme is formed, which can initiate transcription. Mg(2+) is required as a cofactor. It depends on Zn(2+) as a cofactor.

It localises to the plastid. The protein localises to the chloroplast. It catalyses the reaction RNA(n) + a ribonucleoside 5'-triphosphate = RNA(n+1) + diphosphate. Its function is as follows. DNA-dependent RNA polymerase catalyzes the transcription of DNA into RNA using the four ribonucleoside triphosphates as substrates. The polypeptide is DNA-directed RNA polymerase subunit beta' (Atropa belladonna (Belladonna)).